The chain runs to 268 residues: Glutamate racemase (268 aa).

Substrate contacts are provided by residues 9-10 (DS) and 41-42 (YG). Cys-73 acts as the Proton donor/acceptor in catalysis. Substrate is bound at residue 74-75 (NS). Cys-183 functions as the Proton donor/acceptor in the catalytic mechanism. 184-185 (TH) is a substrate binding site.

It belongs to the aspartate/glutamate racemases family.

The enzyme catalyses L-glutamate = D-glutamate. It functions in the pathway cell wall biogenesis; peptidoglycan biosynthesis. Functionally, provides the (R)-glutamate required for cell wall biosynthesis. The polypeptide is Glutamate racemase (Shewanella piezotolerans (strain WP3 / JCM 13877)).